Consider the following 380-residue polypeptide: Oocyte-specific homeobox protein 4 (380 aa).

Disordered stretches follow at residues Met1–Val25, Val43–Arg95, Lys152–Ser182, Pro234–Pro303, and Thr339–Tyr380. The span at Val43–His53 shows a compositional bias: polar residues. A compositionally biased stretch (basic and acidic residues) spans Ser54–Glu67. Positions Cys94–Ser153 form a DNA-binding region, homeobox. Basic and acidic residues predominate over residues Pro234–Ser250. The segment covering Ser260–Ser271 has biased composition (low complexity). 2 stretches are compositionally biased toward polar residues: residues Leu278–Thr302 and Asn351–Tyr380.

It belongs to the paired homeobox family. Obox subfamily. As to expression, specifically expressed in early embryos.

The protein localises to the nucleus. Transcription factor required for zygotic genome activation (ZGA), a critical event in early embryonic development during which the developmental control passes from maternally provided mRNAs to the expression of the zygotic genome after fertilization. Cannot compensate for loss of other members of the Obox family, suggesting that its function differs from other Obox family members. May regulate expression of histone genes in embryonic stem cells. Also involved in completion of meiosis of oocytes during the meiosis-I/meiosis-II transition. Required to maintain the nuclear membrane of the germinal vesicle in oocytes. The sequence is that of Oocyte-specific homeobox protein 4 from Mus musculus (Mouse).